Reading from the N-terminus, the 84-residue chain is MKVTLIAILTCAAVLVLHTTAAEELEESQLMEVGMPDTELEAVDEERLFECSVSCEIEKEGNKDCKKKKCKGGWKCKFNMCVKV.

Positions 1–22 (MKVTLIAILTCAAVLVLHTTAA) are cleaved as a signal peptide. The propeptide occupies 23 to 47 (EELEESQLMEVGMPDTELEAVDEER). 3 disulfides stabilise this stretch: C51/C65, C55/C76, and C70/C81.

The protein belongs to the neurotoxin 12 (Hwtx-2) family. 02 (Hwtx-2) subfamily. As to expression, expressed by the venom gland.

The protein resides in the secreted. Functionally, postsynaptic neurotoxin. This is U4-theraphotoxin-Hhn1a from Cyriopagopus hainanus (Chinese bird spider).